The sequence spans 121 residues: YEGHCYQTFKLFKTWADAESFCTEQAKGGHLVSIESDGEADFVAQLVAENIQKTEIYVWVGLRVQGKEQQCSSEWSDGSSVSYQNWIEAESKTCLGLQKETEFRKWFNIYCGERNPFVCEA.

A C-type lectin domain is found at 1-120 (YEGHCYQTFK…CGERNPFVCE (120 aa)). 2 disulfides stabilise this stretch: Cys22-Cys119 and Cys94-Cys111. Ser33, Glu35, and Glu39 together coordinate Ca(2+). Position 120 (Glu120) interacts with Ca(2+).

Belongs to the snaclec family. As to quaternary structure, heterodimer of subunits A and B; disulfide-linked. Expressed by the venom gland.

It localises to the secreted. Functionally, anticoagulant protein which binds to the gamma-carboxyglutamic acid-domain regions of factor IX (F9) (but not factor X) in the presence of calcium with a 1 to 1 stoichiometry. The polypeptide is Snaclec coagulation factor IX-binding protein subunit A (Gloydius halys (Chinese water mocassin)).